Consider the following 193-residue polypeptide: DNA damage-inducible transcript 4-like protein (193 aa).

The protein belongs to the DDIT4 family.

Its subcellular location is the cytoplasm. In terms of biological role, inhibits cell growth by regulating the TOR signaling pathway upstream of the TSC1-TSC2 complex and downstream of AKT1. In Mus musculus (Mouse), this protein is DNA damage-inducible transcript 4-like protein (Ddit4l).